A 213-amino-acid chain; its full sequence is Transcription antitermination protein NusB (213 aa).

The protein belongs to the NusB family.

Its function is as follows. Involved in transcription antitermination. Required for transcription of ribosomal RNA (rRNA) genes. Binds specifically to the boxA antiterminator sequence of the ribosomal RNA (rrn) operons. In Nostoc punctiforme (strain ATCC 29133 / PCC 73102), this protein is Transcription antitermination protein NusB.